We begin with the raw amino-acid sequence, 305 residues long: Ornithine carbamoyltransferase (305 aa).

Carbamoyl phosphate-binding positions include 54 to 57 (STRT), Q81, R105, and 132 to 135 (HPCQ). L-ornithine contacts are provided by residues N163, D223, and 227–228 (SM). Residues 262 to 263 (CL) and R290 contribute to the carbamoyl phosphate site.

This sequence belongs to the aspartate/ornithine carbamoyltransferase superfamily. OTCase family.

Its subcellular location is the cytoplasm. The enzyme catalyses carbamoyl phosphate + L-ornithine = L-citrulline + phosphate + H(+). It participates in amino-acid biosynthesis; L-arginine biosynthesis; L-arginine from L-ornithine and carbamoyl phosphate: step 1/3. In terms of biological role, reversibly catalyzes the transfer of the carbamoyl group from carbamoyl phosphate (CP) to the N(epsilon) atom of ornithine (ORN) to produce L-citrulline. In Agrobacterium fabrum (strain C58 / ATCC 33970) (Agrobacterium tumefaciens (strain C58)), this protein is Ornithine carbamoyltransferase.